We begin with the raw amino-acid sequence, 1046 residues long: Multidrug resistance protein MexB (1046 aa).

The Cytoplasmic segment spans residues 1 to 9; it reads MSKFFIDRP. The helical transmembrane segment at 10–28 threads the bilayer; that stretch reads IFAWVIALVIMLAGGLSIL. The Periplasmic portion of the chain corresponds to 29–339; sequence SLPVNQYPAI…TPVVSASIHE (311 aa). A helical membrane pass occupies residues 340-359; it reads VVKTLGEAILLVFLVMYLFL. At 360–365 the chain is on the cytoplasmic side; it reads QNFRAT. The helical transmembrane segment at 366 to 385 threads the bilayer; sequence LIPTIAVPVVLLGTFGVLAA. At 386 to 391 the chain is on the periplasmic side; it reads FGFSIN. Residues 392–413 traverse the membrane as a helical segment; it reads TLTMFGMVLAIGLLVDDAIVVV. Residues 414–441 lie on the Cytoplasmic side of the membrane; sequence ENVERVMAEEGLSPREAARKSMGQIQGA. The helical transmembrane segment at 442-460 threads the bilayer; it reads LVGIAMVLSAVFLPMAFFG. The Periplasmic segment spans residues 461–473; the sequence is GSTGVIYRQFSIT. Residues 474–496 traverse the membrane as a helical segment; sequence IVSAMALSVIVALILTPALCATM. The Cytoplasmic segment spans residues 497-538; the sequence is LKPIEKGDHGEHKGGFFGWFNRMFLSTTHGYERGVASILKHR. The chain crosses the membrane as a helical span at residues 539–557; the sequence is APYLLIYVVIVAGMIWMFT. Over 558–871 the chain is Periplasmic; sequence RIPTAFLPDE…SYEERLSGSQ (314 aa). The chain crosses the membrane as a helical span at residues 872-891; the sequence is APALYALSLLVVFLCLAALY. Topologically, residues 892 to 897 are cytoplasmic; sequence ESWSIP. A helical transmembrane segment spans residues 898–917; sequence FSVMLVVPLGVIGALLATSM. The Periplasmic segment spans residues 918–923; it reads RGLSND. The chain crosses the membrane as a helical span at residues 924 to 945; it reads VFFQVGLLTTIGLSAKNAILIV. Residues 946–972 lie on the Cytoplasmic side of the membrane; the sequence is EFAKELHEQGKGIVEAAIEACRMRLRP. The helical transmembrane segment at 973-991 threads the bilayer; that stretch reads IVMTSLAFILGVVPLAIST. The Periplasmic segment spans residues 992 to 1004; the sequence is GAGSGSQHAIGTG. The chain crosses the membrane as a helical span at residues 1005-1027; the sequence is VIGGMVTATVLAIFWVPLFYVAV. The Cytoplasmic portion of the chain corresponds to 1028 to 1046; the sequence is STLFKDEASKQQASVEKGQ.

Belongs to the resistance-nodulation-cell division (RND) (TC 2.A.6) family. As to quaternary structure, component of the MexAB-OprM multidrug efflux complex, composed of six MexA subunits forming a hexameric tube, binding to a MexB trimer, which interact with the trimeric OprM outer membrane channel protein. OprM is thought to not directly contact MexB; instead, MexA joins MexB and OprM by forming a funnel-like hexamer anchored to the inner membrane. MexA may initially form a hexameric ring complex with MexB prior to OprM, then OprM undergoes a conformational change as it contacts MexA, allowing the periplasmic gate to open. It is thought that, under high intracellular substrate concentration, MexB ejects substrate into the tunnel formed by MexA-OprM; as the substrate level declines, conformational changes in MexB cause efflux to reduce and stop and the complex shifts to the closed state. Acts as a substrate:proton antiporter and activity is enhanced significantly when in complex with MexA and OprM, in vitro.

The protein resides in the cell inner membrane. With respect to regulation, export of antibiotics and solvents is dramatically decreased in the presence of the protonophore carbonyl cyanide m-chlorophenylhydrazone (CCCP), therefore may be driven by a proton gradient. Antibiotic efflux is inhibited by pyridopyrimidine derivatives, such as ABI-PP, acting by binding to a hydrophobic pocket in MexB. Functionally, the inner membrane transporter component of the MexAB-OprM efflux system that confers multidrug resistance. Functions as the major efflux pump for n-hexane and p-xylene efflux. Has been shown in one study to be involved in the active efflux of the autoinducer N-(3-oxododecanoyl) homoserine lactone, thereby playing an indirect role in quorum-sensing; but has been shown in another study not to be involved in efflux of this autoinducer. Over-expression of the pump increases antibiotic and solvent efflux capacities. Implicated in the secretion of the siderophore pyoverdine. The protein is Multidrug resistance protein MexB (mexB) of Pseudomonas aeruginosa (strain ATCC 15692 / DSM 22644 / CIP 104116 / JCM 14847 / LMG 12228 / 1C / PRS 101 / PAO1).